Consider the following 430-residue polypeptide: Gamma-glutamyl phosphate reductase (430 aa).

The protein belongs to the gamma-glutamyl phosphate reductase family.

It is found in the cytoplasm. It carries out the reaction L-glutamate 5-semialdehyde + phosphate + NADP(+) = L-glutamyl 5-phosphate + NADPH + H(+). The protein operates within amino-acid biosynthesis; L-proline biosynthesis; L-glutamate 5-semialdehyde from L-glutamate: step 2/2. In terms of biological role, catalyzes the NADPH-dependent reduction of L-glutamate 5-phosphate into L-glutamate 5-semialdehyde and phosphate. The product spontaneously undergoes cyclization to form 1-pyrroline-5-carboxylate. This chain is Gamma-glutamyl phosphate reductase, found in Rhodopseudomonas palustris (strain TIE-1).